The primary structure comprises 216 residues: Large ribosomal subunit protein uL3 (216 aa).

The tract at residues 132–157 (FRGQGASHGTQAVHRKPGSIGGCATP) is disordered.

The protein belongs to the universal ribosomal protein uL3 family. Part of the 50S ribosomal subunit. Forms a cluster with proteins L14 and L19.

Functionally, one of the primary rRNA binding proteins, it binds directly near the 3'-end of the 23S rRNA, where it nucleates assembly of the 50S subunit. This Saccharopolyspora erythraea (strain ATCC 11635 / DSM 40517 / JCM 4748 / NBRC 13426 / NCIMB 8594 / NRRL 2338) protein is Large ribosomal subunit protein uL3.